The chain runs to 161 residues: Protein ilm1 (161 aa).

The Cytoplasmic segment spans residues 1 to 6 (MLFSFR). Residues 7–27 (AIVLFYCCMLTFAGIGFLWNP) traverse the membrane as a helical segment. At 28–56 (KFVVESGLVALIGASMEVKPLIVTQDNLS) the chain is on the lumenal side. The chain crosses the membrane as a helical span at residues 57–77 (TLALSGLVFLILGMIYTISLL). At 78-81 (QSNF) the chain is on the cytoplasmic side. A helical transmembrane segment spans residues 82 to 102 (LFFSGITPIRAIFDFILTGFI). The Lumenal portion of the chain corresponds to 103–112 (YLKKEHIASN). Residues 113–133 (SLTFTFAFCDLMWQFWMFAAM) traverse the membrane as a helical segment. Residues 134–161 (SEERAKYLKNQKKAEELAARKAREVEES) are Cytoplasmic-facing.

This sequence belongs to the ILM1 family.

It localises to the endoplasmic reticulum. It is found in the membrane. The sequence is that of Protein ilm1 from Schizosaccharomyces pombe (strain 972 / ATCC 24843) (Fission yeast).